A 458-amino-acid chain; its full sequence is Retinoic acid receptor RXR-beta (458 aa).

Positions 1-17 are enriched in basic and acidic residues; that stretch reads GEAGRDGMGDTGRDSRS. The tract at residues 1 to 105 is disordered; that stretch reads GEAGRDGMGD…GGSGPPEDVK (105 aa). The segment at 1 to 129 is modulating; that stretch reads GEAGRDGMGD…PGGPGAGKRL (129 aa). The span at 18-31 shows a compositional bias: low complexity; sequence PDSSSPNPLSQGIP. Over residues 32 to 56 the composition is skewed to pro residues; sequence PSSPPGPPHTPSAPPPPMPPPPLGS. Positions 57-68 are enriched in low complexity; that stretch reads PFPVISSSMGSP. Over residues 69–78 the composition is skewed to pro residues; it reads GLPPPAPPGF. NR C4-type zinc fingers lie at residues 130–150 and 166–190; these read CAIC…CEGC and CRDN…YQKC. The nuclear receptor DNA-binding region spans 130–195; that stretch reads CAICGDRSSG…RYQKCLATGM (66 aa). The segment at 196 to 220 is hinge; sequence KREAVQEERQRGKDKDGDGDGAGGA. Over residues 201 to 213 the composition is skewed to basic and acidic residues; sequence QEERQRGKDKDGD. Disordered regions lie at residues 201 to 223 and 238 to 261; these read QEER…APEE and QKSD…NDPV. The 234-residue stretch at 221 to 454 folds into the NR LBD domain; it reads PEEMPVDRIL…TFLMEMLEAP (234 aa). The segment covering 245–255 has biased composition (gly residues); sequence EGPGATGGGGS.

Belongs to the nuclear hormone receptor family. NR2 subfamily. As to quaternary structure, homodimer (in vitro). Heterodimer with other retinoic acid receptor family members. Binds DNA preferentially as a RAR/RXR heterodimer. Interacts with NR1H3. Interacts with AKAP13. As to expression, expressed in the adrenal gland with main expression in the zona fasciculata (at protein level).

The protein localises to the nucleus. It localises to the cytoplasm. In terms of biological role, receptor for retinoic acid. Retinoic acid receptors bind as heterodimers to their target response elements in response to their ligands, all-trans or 9-cis retinoic acid, and regulate gene expression in various biological processes. The RAR/RXR heterodimers bind to the retinoic acid response elements (RARE). The sequence is that of Retinoic acid receptor RXR-beta (Rxrb) from Rattus norvegicus (Rat).